A 178-amino-acid polypeptide reads, in one-letter code: Caveolin-1 (178 aa).

N-acetylserine is present on serine 2. At serine 2 the chain carries Phosphoserine. The segment at 2–94 (SGGKYVDSEG…WKASFTTFTV (93 aa)) is required for homooligomerization. Over 2–104 (SGGKYVDSEG…TKYWFYRLLS (103 aa)) the chain is Cytoplasmic. An N6-acetyllysine; alternate modification is found at lysine 5. Lysine 5 participates in a covalent cross-link: Glycyl lysine isopeptide (Lys-Gly) (interchain with G-Cter in ubiquitin); alternate. Tyrosine 6 bears the Phosphotyrosine mark. Serine 9 is subject to Phosphoserine. Tyrosine 14 bears the Phosphotyrosine; by ABL1 mark. Residue tyrosine 25 is modified to Phosphotyrosine. Glycyl lysine isopeptide (Lys-Gly) (interchain with G-Cter in ubiquitin) cross-links involve residues lysine 26 and lysine 30. The residue at position 37 (serine 37) is a Phosphoserine. Glycyl lysine isopeptide (Lys-Gly) (interchain with G-Cter in ubiquitin) cross-links involve residues lysine 39, lysine 47, and lysine 57. Residues 82-94 (DGIWKASFTTFTV) form an interaction with CAVIN3 region. An intramembrane region (helical) is located at residues 105–125 (ALFGIPMALVWGIYFAILSFL). The Cytoplasmic segment spans residues 126–178 (HIWAVVPCIKSFLIEIQCISRVYSIYVHTVCDPLFEAVGKIFSNVRINLQKEI). The interval 131–142 (VPCIKSFLIEIQ) is interacts with SPRY1, SPRY2, SPRY3 and SPRY4. S-palmitoyl cysteine attachment occurs at residues cysteine 133, cysteine 143, and cysteine 156. The interval 149–160 (SIYVHTVCDPLF) is interacts with SPRY1, SPRY2, and SPRY4. The segment at 167 to 178 (FSNVRINLQKEI) is interacts with SPRY1, SPRY2, SPRY3 and SPRY4.

It belongs to the caveolin family. In terms of assembly, homooligomer. Interacts with GLIPR2. Interacts with NOSTRIN. Interacts with SNAP25 and STX1A. Interacts (via the N-terminus) with DPP4; the interaction is direct. Interacts with CTNNB1, CDH1 and JUP. Interacts with PACSIN2; this interaction induces membrane tubulation. Interacts with SLC7A9. Interacts with BMX and BTK. Interacts with TGFBR1. Interacts with CAVIN3 (via leucine-zipper domain) in a cholesterol-sensitive manner. Interacts with CAVIN1. Interacts with EHD2 in a cholesterol-dependent manner. Forms a ternary complex with UBXN6 and VCP; mediates CAV1 targeting to lysosomes for degradation. Interacts with ABCG1; this interaction regulates ABCG1-mediated cholesterol efflux. Interacts with NEU3; this interaction enhances NEU3 sialidase activity within caveola. Interacts (via C-terminus) with SPRY1, SPRY2 (via C-terminus), SPRY3, and SPRY4. Interacts with IGFBP5; this interaction allows trafficking of IGFBP5 from the plasma membrane to the nucleus. Post-translationally, phosphorylated at Tyr-14 by ABL1 in response to oxidative stress. In terms of processing, ubiquitinated. Undergo monoubiquitination and multi- and/or polyubiquitination. Monoubiquitination of N-terminal lysines promotes integration in a ternary complex with UBXN6 and VCP which promotes oligomeric CAV1 targeting to lysosomes for degradation. Ubiquitinated by ZNRF1; leading to degradation and modulation of the TLR4-mediated immune response.

It localises to the golgi apparatus membrane. Its subcellular location is the cell membrane. The protein resides in the membrane. The protein localises to the caveola. It is found in the membrane raft. In terms of biological role, may act as a scaffolding protein within caveolar membranes. Forms a stable heterooligomeric complex with CAV2 that targets to lipid rafts and drives caveolae formation. Mediates the recruitment of CAVIN proteins (CAVIN1/2/3/4) to the caveolae. Interacts directly with G-protein alpha subunits and can functionally regulate their activity. Involved in the costimulatory signal essential for T-cell receptor (TCR)-mediated T-cell activation. Its binding to DPP4 induces T-cell proliferation and NF-kappa-B activation in a T-cell receptor/CD3-dependent manner. Recruits CTNNB1 to caveolar membranes and may regulate CTNNB1-mediated signaling through the Wnt pathway. Negatively regulates TGFB1-mediated activation of SMAD2/3 by mediating the internalization of TGFBR1 from membrane rafts leading to its subsequent degradation. Binds 20(S)-hydroxycholesterol (20(S)-OHC). The protein is Caveolin-1 (CAV1) of Papio anubis (Olive baboon).